Reading from the N-terminus, the 561-residue chain is TBC1 domain family member 24 (561 aa).

Residues Lys36 and Arg40 each contribute to the a 1,2-diacyl-sn-glycero-3-phospho-(1D-myo-inositol) site. The Rab-GAP TBC domain occupies 45–236 (AQSHTLRGKV…RVFDVFLVEG (192 aa)). Residues Lys238, Arg242, and 293 to 297 (RLFSR) each bind a 1,2-diacyl-sn-glycero-3-phospho-(1D-myo-inositol). Residues 343–556 (EIVSVKEMRD…IAAVEAWGFQ (214 aa)) enclose the TLDc domain. Ser475 and Ser482 each carry phosphoserine.

As to quaternary structure, interacts with ARF6. As to expression, expressed in brain, particularly at the level of the cortex and the hippocampus. Expressed in the inner ear in spiral ganglion cells, a collection of neurons critical for hearing and balance.

It localises to the cell membrane. Its subcellular location is the cytoplasm. The protein localises to the cytoplasmic vesicle membrane. The protein resides in the presynapse. Its function is as follows. May act as a GTPase-activating protein for Rab family protein(s). Involved in neuronal projections development, probably through a negative modulation of ARF6 function. Involved in the regulation of synaptic vesicle trafficking. The protein is TBC1 domain family member 24 (Tbc1d24) of Mus musculus (Mouse).